A 212-amino-acid chain; its full sequence is Phosphatidylserine decarboxylase proenzyme (212 aa).

Ser-182 functions as the Schiff-base intermediate with substrate; via pyruvic acid in the catalytic mechanism. Ser-182 carries the pyruvic acid (Ser); by autocatalysis modification.

Belongs to the phosphatidylserine decarboxylase family. PSD-A subfamily. Heterodimer of a large membrane-associated beta subunit and a small pyruvoyl-containing alpha subunit. Pyruvate is required as a cofactor. Is synthesized initially as an inactive proenzyme. Formation of the active enzyme involves a self-maturation process in which the active site pyruvoyl group is generated from an internal serine residue via an autocatalytic post-translational modification. Two non-identical subunits are generated from the proenzyme in this reaction, and the pyruvate is formed at the N-terminus of the alpha chain, which is derived from the carboxyl end of the proenzyme. The post-translation cleavage follows an unusual pathway, termed non-hydrolytic serinolysis, in which the side chain hydroxyl group of the serine supplies its oxygen atom to form the C-terminus of the beta chain, while the remainder of the serine residue undergoes an oxidative deamination to produce ammonia and the pyruvoyl prosthetic group on the alpha chain.

The protein resides in the cell membrane. It catalyses the reaction a 1,2-diacyl-sn-glycero-3-phospho-L-serine + H(+) = a 1,2-diacyl-sn-glycero-3-phosphoethanolamine + CO2. Its pathway is phospholipid metabolism; phosphatidylethanolamine biosynthesis; phosphatidylethanolamine from CDP-diacylglycerol: step 2/2. Catalyzes the formation of phosphatidylethanolamine (PtdEtn) from phosphatidylserine (PtdSer). The chain is Phosphatidylserine decarboxylase proenzyme from Paraburkholderia xenovorans (strain LB400).